The following is a 499-amino-acid chain: uncharacterized protein (499 aa).

The RING-type; degenerate zinc finger occupies 10–57 (CGICGQEYSEDEKLLIPRILTECGHTICTGCAGKIKGQSSIIACPFDR). The segment at 101-147 (NKNGVCDENTNHHASNYCETCDADLCEECWTWIHSISTLAHHEKKMI) adopts a B box-type; degenerate zinc-finger fold.

This is an uncharacterized protein from Caenorhabditis elegans.